The sequence spans 338 residues: Tetraacyldisaccharide 4'-kinase (338 aa).

An ATP-binding site is contributed by 67-74 (IAGGAGKT).

It belongs to the LpxK family.

The enzyme catalyses a lipid A disaccharide + ATP = a lipid IVA + ADP + H(+). Its pathway is glycolipid biosynthesis; lipid IV(A) biosynthesis; lipid IV(A) from (3R)-3-hydroxytetradecanoyl-[acyl-carrier-protein] and UDP-N-acetyl-alpha-D-glucosamine: step 6/6. In terms of biological role, transfers the gamma-phosphate of ATP to the 4'-position of a tetraacyldisaccharide 1-phosphate intermediate (termed DS-1-P) to form tetraacyldisaccharide 1,4'-bis-phosphate (lipid IVA). The protein is Tetraacyldisaccharide 4'-kinase of Acidovorax ebreus (strain TPSY) (Diaphorobacter sp. (strain TPSY)).